The primary structure comprises 297 residues: Phosphoribosylaminoimidazole-succinocarboxamide synthase (297 aa).

Belongs to the SAICAR synthetase family.

It catalyses the reaction 5-amino-1-(5-phospho-D-ribosyl)imidazole-4-carboxylate + L-aspartate + ATP = (2S)-2-[5-amino-1-(5-phospho-beta-D-ribosyl)imidazole-4-carboxamido]succinate + ADP + phosphate + 2 H(+). The protein operates within purine metabolism; IMP biosynthesis via de novo pathway; 5-amino-1-(5-phospho-D-ribosyl)imidazole-4-carboxamide from 5-amino-1-(5-phospho-D-ribosyl)imidazole-4-carboxylate: step 1/2. The sequence is that of Phosphoribosylaminoimidazole-succinocarboxamide synthase from Methylobacillus flagellatus (strain ATCC 51484 / DSM 6875 / VKM B-1610 / KT).